A 355-amino-acid polypeptide reads, in one-letter code: Alanine racemase (355 aa).

The active-site Proton acceptor; specific for D-alanine is the lysine 34. An N6-(pyridoxal phosphate)lysine modification is found at lysine 34. Arginine 133 is a substrate binding site. The Proton acceptor; specific for L-alanine role is filled by tyrosine 249. Substrate is bound at residue methionine 297.

Belongs to the alanine racemase family. Pyridoxal 5'-phosphate serves as cofactor.

The catalysed reaction is L-alanine = D-alanine. It functions in the pathway amino-acid biosynthesis; D-alanine biosynthesis; D-alanine from L-alanine: step 1/1. Functionally, catalyzes the interconversion of L-alanine and D-alanine. May also act on other amino acids. This Rickettsia akari (strain Hartford) protein is Alanine racemase (alr).